Consider the following 260-residue polypeptide: Cytochrome c oxidase subunit 3 (260 aa).

Helical transmembrane passes span P14–F34, L41–I61, G81–F101, F126–A146, A158–W178, F196–I216, and A238–W258.

Belongs to the cytochrome c oxidase subunit 3 family. As to quaternary structure, component of the cytochrome c oxidase (complex IV, CIV), a multisubunit enzyme composed of a catalytic core of 3 subunits and several supernumerary subunits. The complex exists as a monomer or a dimer and forms supercomplexes (SCs) in the inner mitochondrial membrane with ubiquinol-cytochrome c oxidoreductase (cytochrome b-c1 complex, complex III, CIII).

Its subcellular location is the mitochondrion inner membrane. The catalysed reaction is 4 Fe(II)-[cytochrome c] + O2 + 8 H(+)(in) = 4 Fe(III)-[cytochrome c] + 2 H2O + 4 H(+)(out). In terms of biological role, component of the cytochrome c oxidase, the last enzyme in the mitochondrial electron transport chain which drives oxidative phosphorylation. The respiratory chain contains 3 multisubunit complexes succinate dehydrogenase (complex II, CII), ubiquinol-cytochrome c oxidoreductase (cytochrome b-c1 complex, complex III, CIII) and cytochrome c oxidase (complex IV, CIV), that cooperate to transfer electrons derived from NADH and succinate to molecular oxygen, creating an electrochemical gradient over the inner membrane that drives transmembrane transport and the ATP synthase. Cytochrome c oxidase is the component of the respiratory chain that catalyzes the reduction of oxygen to water. Electrons originating from reduced cytochrome c in the intermembrane space (IMS) are transferred via the dinuclear copper A center (CU(A)) of subunit 2 and heme A of subunit 1 to the active site in subunit 1, a binuclear center (BNC) formed by heme A3 and copper B (CU(B)). The BNC reduces molecular oxygen to 2 water molecules using 4 electrons from cytochrome c in the IMS and 4 protons from the mitochondrial matrix. This chain is Cytochrome c oxidase subunit 3 (COIII), found in Patiria pectinifera (Starfish).